Consider the following 98-residue polypeptide: Large ribosomal subunit protein uL23 (98 aa).

Belongs to the universal ribosomal protein uL23 family. Part of the 50S ribosomal subunit. Contacts protein L29, and trigger factor when it is bound to the ribosome.

Functionally, one of the early assembly proteins it binds 23S rRNA. One of the proteins that surrounds the polypeptide exit tunnel on the outside of the ribosome. Forms the main docking site for trigger factor binding to the ribosome. The polypeptide is Large ribosomal subunit protein uL23 (Frankia casuarinae (strain DSM 45818 / CECT 9043 / HFP020203 / CcI3)).